A 92-amino-acid chain; its full sequence is Small ribosomal subunit protein uS19 (92 aa).

This sequence belongs to the universal ribosomal protein uS19 family.

Functionally, protein S19 forms a complex with S13 that binds strongly to the 16S ribosomal RNA. This chain is Small ribosomal subunit protein uS19, found in Chelativorans sp. (strain BNC1).